Here is a 195-residue protein sequence, read N- to C-terminus: Thymidine kinase (195 aa).

ATP contacts are provided by residues 15 to 22 (GSMFSGKS) and 88 to 91 (DEVQ). The active-site Proton acceptor is Glu-89. Substrate is bound at residue Phe-120. The Zn(2+) site is built by Cys-145 and Cys-148. Substrate-binding positions include 170 to 174 (IILVG) and Tyr-179. Zn(2+) is bound by residues Cys-183 and Cys-186.

The protein belongs to the thymidine kinase family. As to quaternary structure, homotetramer.

It is found in the cytoplasm. It catalyses the reaction thymidine + ATP = dTMP + ADP + H(+). The polypeptide is Thymidine kinase (Bacillus cereus (strain ATCC 14579 / DSM 31 / CCUG 7414 / JCM 2152 / NBRC 15305 / NCIMB 9373 / NCTC 2599 / NRRL B-3711)).